We begin with the raw amino-acid sequence, 729 residues long: Phenylalanine ammonia-lyase (729 aa).

Residue Tyr-77 is the Proton donor/acceptor of the active site. The 5-imidazolinone (Ala-Gly) cross-link spans 182 to 184; it reads ASG. 2,3-didehydroalanine (Ser) is present on Ser-183. (E)-cinnamate contacts are provided by Asn-241, Gln-336, Arg-342, Asn-372, Lys-443, Glu-471, and Asn-474.

It belongs to the PAL/histidase family. Post-translationally, contains an active site 4-methylidene-imidazol-5-one (MIO), which is formed autocatalytically by cyclization and dehydration of residues Ala-Ser-Gly.

The protein resides in the cytoplasm. The catalysed reaction is L-phenylalanine = (E)-cinnamate + NH4(+). Its pathway is secondary metabolite biosynthesis. It participates in phenylpropanoid metabolism; trans-cinnamate biosynthesis; trans-cinnamate from L-phenylalanine: step 1/1. Its function is as follows. Phenylalanine ammonia-lyase; part of the gene cluster that mediates the biosynthesis of squalestatin S1 (SQS1, also known as zaragozic acid A), a heavily oxidized fungal polyketide that offers potent cholesterol lowering activity by targeting squalene synthase (SS). SQS1 is composed of a 2,8-dioxobicyclic[3.2.1]octane-3,4,5-tricarboxyclic acid core that is connected to two lipophilic polyketide arms. These initial steps feature the priming of an unusual benzoic acid starter unit onto the highly reducing polyketide synthase pks2, followed by oxaloacetate extension and product release to generate a tricarboxylic acid containing product. The phenylalanine ammonia lyase (PAL) M7 and the acyl-CoA ligase M9 are involved in transforming phenylalanine into benzoyl-CoA. The citrate synthase-like protein R3 is involved in connecting the C-alpha-carbons of the hexaketide chain and oxaloacetate to afford the tricarboxylic acid unit. The potential hydrolytic enzymes, M8 and M10, are in close proximity to pks2 and may participate in product release. On the other side, the tetraketide arm is synthesized by a the squalestatin tetraketide synthase pks1 and enzymatically esterified to the core in the last biosynthetic step, by the acetyltransferase M4. The biosynthesis of the tetraketide must involve 3 rounds of chain extension. After the first and second rounds methyl-transfer occurs, and in all rounds of extension the ketoreductase and dehydratase are active. The enoyl reductase and C-MeT of pks1 are not active in the final round of extension. The acetyltransferase M4 appears to have a broad substrate selectivity for its acyl CoA substrate, allowing the in vitro synthesis of novel squalestatins. The biosynthesis of SQS1 requires several oxidative steps likely performed by oxidoreductases M1, R1 and R2. Finally, in support of the identification of the cluster as being responsible for SQS1 production, the cluster contains a gene encoding a putative squalene synthase (SS) R6, suggesting a likely mechanism for self-resistance. The chain is Phenylalanine ammonia-lyase from Phoma sp. (strain ATCC 20986 / MF5453).